We begin with the raw amino-acid sequence, 489 residues long: NF-kappa-B inhibitor cactus (489 aa).

Residues 1–26 (MPSPTKAAEAATKATATSDCSCSAAS) are compositionally biased toward low complexity. Disordered regions lie at residues 1–138 (MPSP…SMRL) and 163–203 (NNLG…APPS). Residue S45 is modified to Phosphoserine; by PKC. A compositionally biased stretch (polar residues) spans 69–86 (NETSDSGFISGPQSSQIC). S135 carries the phosphoserine; by PKC modification. Residues 163–180 (NNLGQSSSTQITGRSKFQ) show a composition bias toward polar residues. T174 bears the Phosphothreonine; by PKC mark. Over residues 181–203 (SSTASTANANPSGXGATSSAPPS) the composition is skewed to low complexity. 5 ANK repeats span residues 220–252 (DGDT…LLNI), 256–285 (VAQT…EVRD), 287–316 (HGNT…ATEI), 350–379 (DGER…DINA), and 384–413 (SGRT…KLNL). Residue T308 is modified to Phosphothreonine; by PKC. S384 is modified (phosphoserine; by PKC).

The protein resides in the cytoplasm. Its function is as follows. Involved in the formation of the dorsoventral pattern. It inhibits nuclear translocation of the dorsal morphogen in the dorsal region of the embryo. The protein is NF-kappa-B inhibitor cactus (cact) of Drosophila yakuba (Fruit fly).